We begin with the raw amino-acid sequence, 859 residues long: DNA mismatch repair protein MutS (859 aa).

Residue 618–625 participates in ATP binding; the sequence is GPNMGGKS. The segment at 803–829 is disordered; the sequence is RDHDVQQNTEQQGTQQNMSFVPSAPSP. Residues 808 to 819 show a composition bias toward low complexity; sequence QQNTEQQGTQQN.

Belongs to the DNA mismatch repair MutS family.

This protein is involved in the repair of mismatches in DNA. It is possible that it carries out the mismatch recognition step. This protein has a weak ATPase activity. This chain is DNA mismatch repair protein MutS, found in Shewanella pealeana (strain ATCC 700345 / ANG-SQ1).